The chain runs to 510 residues: NAD(P)H-quinone oxidoreductase subunit 2, chloroplastic (510 aa).

Helical transmembrane passes span 28 to 48 (DGSF…LLII), 57 to 77 (IPWL…TLLF), 99 to 119 (IFQF…VEYI), 124 to 144 (MALT…MFLC), 149 to 169 (LITI…LSGY), 183 to 203 (YLLM…WLYG), 227 to 247 (PGIS…LSPA), 295 to 315 (WHLL…LIAI), 323 to 343 (MLAY…IVGD), 354 to 374 (YMLF…LFGL), 395 to 415 (ALSL…AGFF), 418 to 438 (LYLF…IGLL), and 484 to 504 (MIVC…IIAI).

The protein belongs to the complex I subunit 2 family. NDH is composed of at least 16 different subunits, 5 of which are encoded in the nucleus.

It is found in the plastid. It localises to the chloroplast thylakoid membrane. It carries out the reaction a plastoquinone + NADH + (n+1) H(+)(in) = a plastoquinol + NAD(+) + n H(+)(out). The enzyme catalyses a plastoquinone + NADPH + (n+1) H(+)(in) = a plastoquinol + NADP(+) + n H(+)(out). In terms of biological role, NDH shuttles electrons from NAD(P)H:plastoquinone, via FMN and iron-sulfur (Fe-S) centers, to quinones in the photosynthetic chain and possibly in a chloroplast respiratory chain. The immediate electron acceptor for the enzyme in this species is believed to be plastoquinone. Couples the redox reaction to proton translocation, and thus conserves the redox energy in a proton gradient. The chain is NAD(P)H-quinone oxidoreductase subunit 2, chloroplastic from Silene latifolia (White campion).